We begin with the raw amino-acid sequence, 273 residues long: Dermonecrotic toxin LapSicTox-alphaIB1c (273 aa).

H5 is an active-site residue. Mg(2+)-binding residues include E25 and D27. H41 acts as the Nucleophile in catalysis. Disulfide bonds link C45–C51 and C47–C190. D85 lines the Mg(2+) pocket. A glycan (N-linked (GlcNAc...) asparagine) is linked at N250.

The protein belongs to the arthropod phospholipase D family. Class II subfamily. Mg(2+) is required as a cofactor. In terms of tissue distribution, expressed by the venom gland.

Its subcellular location is the secreted. It carries out the reaction an N-(acyl)-sphingosylphosphocholine = an N-(acyl)-sphingosyl-1,3-cyclic phosphate + choline. The catalysed reaction is an N-(acyl)-sphingosylphosphoethanolamine = an N-(acyl)-sphingosyl-1,3-cyclic phosphate + ethanolamine. It catalyses the reaction a 1-acyl-sn-glycero-3-phosphocholine = a 1-acyl-sn-glycero-2,3-cyclic phosphate + choline. The enzyme catalyses a 1-acyl-sn-glycero-3-phosphoethanolamine = a 1-acyl-sn-glycero-2,3-cyclic phosphate + ethanolamine. In terms of biological role, dermonecrotic toxins cleave the phosphodiester linkage between the phosphate and headgroup of certain phospholipids (sphingolipid and lysolipid substrates), forming an alcohol (often choline) and a cyclic phosphate. This toxin acts on sphingomyelin (SM). It may also act on ceramide phosphoethanolamine (CPE), lysophosphatidylcholine (LPC) and lysophosphatidylethanolamine (LPE), but not on lysophosphatidylserine (LPS), and lysophosphatidylglycerol (LPG). It acts by transphosphatidylation, releasing exclusively cyclic phosphate products as second products. Induces dermonecrosis, hemolysis, increased vascular permeability, edema, inflammatory response, and platelet aggregation. In Loxosceles apachea (Apache recluse spider), this protein is Dermonecrotic toxin LapSicTox-alphaIB1c.